The following is a 572-amino-acid chain: Asparagine--tRNA ligase, cytoplasmic 1 (572 aa).

The residue at position 2 (Ala-2) is an N-acetylalanine. A DNA-binding region (OB) is located at residues 53–131; sequence VRIGGWVKSG…QQIELNVVKV (79 aa). One can recognise a WHEP-TRS domain in the interval 236-292; sequence DVEAARLIVIERGNVVAELKAAKASKEAITAAVAELKIAKETFAHIDERSRLRPGLP.

It belongs to the class-II aminoacyl-tRNA synthetase family.

Its subcellular location is the cytoplasm. It localises to the cytosol. It catalyses the reaction tRNA(Asn) + L-asparagine + ATP = L-asparaginyl-tRNA(Asn) + AMP + diphosphate + H(+). This is Asparagine--tRNA ligase, cytoplasmic 1 from Arabidopsis thaliana (Mouse-ear cress).